The following is an 885-amino-acid chain: Alpha-actinin (885 aa).

Residues 1–242 (MTQDGYMQQE…IMTYVSWYYH (242 aa)) are actin-binding. Calponin-homology (CH) domains are found at residues 26-130 (KQQR…LRFA) and 139-245 (MTAK…HAFH). Spectrin repeat units follow at residues 270–377 (LMEE…EEWL), 389–494 (HLAQ…ALDE), 508–614 (EFAK…HTLQ), and 626–727 (LRRQ…NEVE). 2 consecutive EF-hand domains span residues 741–776 (EQLN…LGYN) and 780–815 (DDRP…EYTD). Residues Asp754, Thr758, Arg760, Glu765, Asp793, Asn795, Thr797, and Tyr799 each contribute to the Ca(2+) site.

The protein belongs to the alpha-actinin family. In terms of assembly, homodimer; antiparallel.

In terms of biological role, F-actin cross-linking protein which is thought to anchor actin to a variety of intracellular structures. This is a bundling protein. The chain is Alpha-actinin from Dermatophagoides farinae (American house dust mite).